A 397-amino-acid chain; its full sequence is Odorant receptor 22a (397 aa).

At 1-49 (MLSKFFPHIKEKPLSERVKSRDAFIYLDRVMWSFGWTEPENKRWILPYK) the chain is on the cytoplasmic side. The helical transmembrane segment at 50–70 (LWLAFVNIVMLILLPISISIE) threads the bilayer. The Extracellular portion of the chain corresponds to 71–86 (YLHRFKTFSAGEFLSS). The helical transmembrane segment at 87–107 (LEIGVNMYGSSFKCAFTLIGF) threads the bilayer. The Cytoplasmic segment spans residues 108–136 (KKRQEAKVLLDQLDKRCLSDKERSTVHRY). A helical membrane pass occupies residues 137–157 (VAMGNFFDILYHIFYSTFVVM). Residues 158 to 182 (NFPYFLLERRHAWRMYFPYIDSDEQ) lie on the Extracellular side of the membrane. The helical transmembrane segment at 183 to 203 (FYISSIAECFLMTEAIYMDLC) threads the bilayer. Topologically, residues 204–263 (TDVCPLISMLMARCHISLLKQRLRNLRSKPGRTEDEYLEELTECIRDHRLLLDYVDALRP) are cytoplasmic. A helical membrane pass occupies residues 264–280 (VFSGTIFVQFLLIGTVL). Residues 281 to 286 (GLSMIN) lie on the Extracellular side of the membrane. A helical membrane pass occupies residues 287 to 304 (LMFFSTFWTGVATCLFMF). At 305-356 (DVSMETFPFCYLCNMIIDDCQEMSNCLFQSDWTSADRRYKSTLVYFLHNLQQ) the chain is on the cytoplasmic side. The chain crosses the membrane as a helical span at residues 357–377 (PITLTAGGVFPISMQTNLAMV). At 378 to 397 (KLAFSVVTVIKQFNLAERFQ) the chain is on the extracellular side.

Belongs to the insect chemoreceptor superfamily. Heteromeric odorant receptor channel (TC 1.A.69) family. Or2a subfamily. In terms of assembly, interacts with Orco, via conserved C-terminal cytoplasmic loops. Complexes exist early in the endomembrane system in olfactory sensory neurons (OSNs), coupling these complexes to the conserved ciliary trafficking pathway. Interacts with snmp1. In terms of tissue distribution, expressed with Orco in 17-20 sensory neurons on the medial-proximal edge of the antenna. Expressed in the ab3A neuron which responds to ethyl butyrate.

It localises to the cell membrane. Its function is as follows. Odorant receptor which mediates acceptance or avoidance behavior, depending on its substrates. The odorant receptor repertoire encodes a large collection of odor stimuli that vary widely in identity, intensity, and duration. Involved in the behavioral responses ethyl butyrate and to esters in more general. Complexes with Orco to form odorant-sensing units, providing sensitive and prolonged odorant signaling and calcium permeability. They are necessary and sufficient to promote functional reconstitution of odor-evoked signaling in sensory neurons that normally respond only to carbon dioxide. The chain is Odorant receptor 22a (Or22a) from Drosophila melanogaster (Fruit fly).